The following is a 266-amino-acid chain: GTP cyclohydrolase FolE2 (266 aa).

The protein belongs to the GTP cyclohydrolase IV family.

The catalysed reaction is GTP + H2O = 7,8-dihydroneopterin 3'-triphosphate + formate + H(+). Its pathway is cofactor biosynthesis; 7,8-dihydroneopterin triphosphate biosynthesis; 7,8-dihydroneopterin triphosphate from GTP: step 1/1. Functionally, converts GTP to 7,8-dihydroneopterin triphosphate. This is GTP cyclohydrolase FolE2 from Methylobacillus flagellatus (strain ATCC 51484 / DSM 6875 / VKM B-1610 / KT).